A 564-amino-acid polypeptide reads, in one-letter code: Potassium-transporting ATPase potassium-binding subunit (564 aa).

The next 10 helical transmembrane spans lie at 4 to 24 (YDYW…PFLG), 67 to 87 (TLAL…ILLF), 135 to 155 (VGLT…LVAL), 179 to 199 (LYGL…QGVP), 258 to 278 (FEVA…GHYV), 286 to 306 (AIIG…LWAE), 382 to 402 (AGLY…GLMI), 420 to 440 (LLVV…AIAA), 487 to 507 (LMLG…VLAL), and 528 to 548 (GPLF…LTFL).

Belongs to the KdpA family. In terms of assembly, the system is composed of three essential subunits: KdpA, KdpB and KdpC.

It is found in the cell inner membrane. Part of the high-affinity ATP-driven potassium transport (or Kdp) system, which catalyzes the hydrolysis of ATP coupled with the electrogenic transport of potassium into the cytoplasm. This subunit binds the periplasmic potassium ions and delivers the ions to the membrane domain of KdpB through an intramembrane tunnel. The sequence is that of Potassium-transporting ATPase potassium-binding subunit from Pseudomonas fluorescens (strain Pf0-1).